The sequence spans 364 residues: Phosphoserine aminotransferase (364 aa).

R41 lines the L-glutamate pocket. Pyridoxal 5'-phosphate is bound by residues 75–76, W100, T155, and Q198; that span reads AS. K199 carries the N6-(pyridoxal phosphate)lysine modification. A pyridoxal 5'-phosphate-binding site is contributed by 239–240; sequence NT.

This sequence belongs to the class-V pyridoxal-phosphate-dependent aminotransferase family. SerC subfamily. In terms of assembly, homodimer. The cofactor is pyridoxal 5'-phosphate.

The protein resides in the cytoplasm. It catalyses the reaction O-phospho-L-serine + 2-oxoglutarate = 3-phosphooxypyruvate + L-glutamate. The enzyme catalyses 4-(phosphooxy)-L-threonine + 2-oxoglutarate = (R)-3-hydroxy-2-oxo-4-phosphooxybutanoate + L-glutamate. It participates in amino-acid biosynthesis; L-serine biosynthesis; L-serine from 3-phospho-D-glycerate: step 2/3. In terms of biological role, catalyzes the reversible conversion of 3-phosphohydroxypyruvate to phosphoserine and of 3-hydroxy-2-oxo-4-phosphonooxybutanoate to phosphohydroxythreonine. This Streptococcus thermophilus (strain ATCC BAA-250 / LMG 18311) protein is Phosphoserine aminotransferase.